The primary structure comprises 66 residues: UPF0337 protein pc0632 (66 aa).

The protein belongs to the UPF0337 (CsbD) family.

The protein is UPF0337 protein pc0632 of Protochlamydia amoebophila (strain UWE25).